A 267-amino-acid chain; its full sequence is Regulatory protein VirG (267 aa).

Residues 29–143 (HVLLVDDDVA…EFLARIRVAL (115 aa)) enclose the Response regulatory domain. D78 carries the post-translational modification 4-aspartylphosphate. A DNA-binding region (ompR/PhoB-type) is located at residues 155–255 (RRSFCFTDWT…ARGAGYFFDA (101 aa)).

Phosphorylated by wide host range (WHR) VirA protein.

The protein localises to the cytoplasm. VirG is required for the positive regulation of at least two vir loci encoded by the Ti plasmid of A.tumefaciens. This is Regulatory protein VirG (virG) from Agrobacterium tumefaciens (strain 15955).